Reading from the N-terminus, the 504-residue chain is Maturase K (504 aa).

This sequence belongs to the intron maturase 2 family. MatK subfamily.

Its subcellular location is the plastid. It is found in the chloroplast. In terms of biological role, usually encoded in the trnK tRNA gene intron. Probably assists in splicing its own and other chloroplast group II introns. The sequence is that of Maturase K from Pachira aquatica (Guiana chestnut).